Here is a 1314-residue protein sequence, read N- to C-terminus: Condensin-2 complex subunit CAP-D3 (1314 aa).

10 HEAT repeats span residues 20–58 (ESDYHELVTDLKSLLDTDDDEILNRFYGSLSSMASSFLR), 98–136 (PIAFLSLLGSIRRYLKRRDDSAGQGSNSQREKGNKKKRG), 184–222 (KSLVQTVSEIPLLALEHSGVLNYDRLMEMCGKILGGVLN), 231–267 (TAAEISKSLTPLLLMGKHQARSFALGFVSRKLMSLAK), 269–310 (NPEL…AMEV), 331–360 (RVLAVDIIPLLISSLGNPLGDISSENGLKD), 361–398 (SWGLGCIDALVQRCSDTSALIRARALSNLAQVVEFLSG), 417–455 (SEGKGAVTDLLKKRCVDEKAAVRRAALLLVTKLTSLMGG), 457–493 (FDGSILKTMGTSCSDPLISIRKAAVSAISEAFRICTD), and 494–532 (EIVTTEWLHSVPRMIMDNETSIQEECENVFHELVLERIL). Positions 116 to 150 (DDSAGQGSNSQREKGNKKKRGRGKRNLGYEDGEET) are disordered. Residues 130 to 140 (GNKKKRGRGKR) show a composition bias toward basic residues. The Nuclear localization signal motif lies at 789–796 (SRRSKRLD). HEAT repeat units follow at residues 821-859 (SADTTKIVPFLHTVITSGNSDSKLKNKLPQANVCLKQKA), 878-916 (GKLAKRYLPLFAQELEKSDCAALRNNLVVAMTDFCVHYT), 917-954 (AMIECYIPKITKRLRDPCEVVRRQTFILLSRLLQRDYV), 956-992 (WRGVLFLRFLLSLVDESEKIRRLADFLFGSILKVKAP), 1053-1091 (QMAPEHLLATFAKLCAEILAAASDGMLNIEDVTGQSVLQ), and 1138-1179 (KGLI…DYKN). 2 disordered regions span residues 1210 to 1237 (MANQGVACGTSHRNGEPEASAASEENVR) and 1265 to 1314 (VNGG…DDES).

Component of the condensin-2 complex. Present in buds.

It localises to the nucleus. The protein localises to the chromosome. Functionally, regulatory subunit of the condensin-2 complex, a complex which establishes mitotic chromosome architecture and is involved in physical rigidity of the chromatid axis. May promote the resolution of double-strand DNA catenanes (intertwines) between sister chromatids. Required for plant vigor, fertility, chromatin condensation and sister chromatid cohesion both during mitosis and meiosis. Necessary to maintain normal structural integrity of the meiotic chromosomes during the two nuclear divisions of gametogenesis, especially to prevent interchromosome connections at metaphase I. Seems also involved in crossover formation during meiotic prophase I. Prevents centromeric and pericentromeric heterochromatin repeats association. This is Condensin-2 complex subunit CAP-D3 from Arabidopsis thaliana (Mouse-ear cress).